A 579-amino-acid chain; its full sequence is Acetolactate synthase (579 aa).

Glu-61 contributes to the thiamine diphosphate binding site. Residues Arg-163, 274–295 (HGTAYANFAVMELDFVIAVGVR), and 317–336 (DIDPAEVGKNRSTDVPIVGD) each bind FAD. Positions 408–487 (QHQMWAGQFV…VKVIILNNGW (80 aa)) are thiamine pyrophosphate binding. 2 residues coordinate Mg(2+): Asp-458 and Asn-485.

This sequence belongs to the TPP enzyme family. Mg(2+) serves as cofactor. It depends on thiamine diphosphate as a cofactor.

It carries out the reaction 2 pyruvate + H(+) = (2S)-2-acetolactate + CO2. Its pathway is amino-acid biosynthesis; L-isoleucine biosynthesis; L-isoleucine from 2-oxobutanoate: step 1/4. It participates in amino-acid biosynthesis; L-valine biosynthesis; L-valine from pyruvate: step 1/4. The sequence is that of Acetolactate synthase (ilvY) from Arthrospira platensis (Spirulina platensis).